A 378-amino-acid polypeptide reads, in one-letter code: DNA replication and repair protein RecF (378 aa).

Position 31 to 38 (31 to 38 (GENGSGKT)) interacts with ATP.

Belongs to the RecF family.

The protein localises to the cytoplasm. Functionally, the RecF protein is involved in DNA metabolism; it is required for DNA replication and normal SOS inducibility. RecF binds preferentially to single-stranded, linear DNA. It also seems to bind ATP. The polypeptide is DNA replication and repair protein RecF (Teredinibacter turnerae (strain ATCC 39867 / T7901)).